The sequence spans 265 residues: Sarcotoxin II-1 (265 aa).

The signal sequence occupies residues 1–22 (MKSFVLFAACMAIIALGSLAHA). A propeptide spans 23–24 (YP) (removed by a dipeptidylpeptidase). The residue at position 25 (Gln-25) is a Pyrrolidone carboxylic acid. Gly-264 is modified (glycine amide).

The protein belongs to the attacin/sarcotoxin-2 family. In terms of tissue distribution, synthesized by the fat body and is eventually secreted into the hemolymph.

It is found in the secreted. Its function is as follows. Sarcotoxin II is an antibacterial protein which plays a role in the inflammatory response of this insect. The main effect of sarcotoxin II on E.coli may be the inhibition of cell wall synthesis, including septum formation. This Sarcophaga peregrina (Flesh fly) protein is Sarcotoxin II-1.